A 147-amino-acid polypeptide reads, in one-letter code: Small ribosomal subunit protein uS5 (147 aa).

The 64-residue stretch at 9 to 72 folds into the S5 DRBM domain; sequence FEEVIVDIGR…DDAFKNIIHV (64 aa).

The protein belongs to the universal ribosomal protein uS5 family. Part of the 30S ribosomal subunit. Contacts proteins S4 and S8.

With S4 and S12 plays an important role in translational accuracy. Its function is as follows. Located at the back of the 30S subunit body where it stabilizes the conformation of the head with respect to the body. This chain is Small ribosomal subunit protein uS5, found in Campylobacter concisus (strain 13826).